Here is a 446-residue protein sequence, read N- to C-terminus: Tol-Pal system protein TolB (446 aa).

The signal sequence occupies residues 1-36; it reads MMDVQTVRRGNAVQSLMSKLILPLVMAVAFALPARA. Positions 424-446 are disordered; that stretch reads GYNERPSPTPTFASDPAWSPRIQ.

Belongs to the TolB family. In terms of assembly, the Tol-Pal system is composed of five core proteins: the inner membrane proteins TolA, TolQ and TolR, the periplasmic protein TolB and the outer membrane protein Pal. They form a network linking the inner and outer membranes and the peptidoglycan layer.

The protein resides in the periplasm. In terms of biological role, part of the Tol-Pal system, which plays a role in outer membrane invagination during cell division and is important for maintaining outer membrane integrity. The sequence is that of Tol-Pal system protein TolB from Parvibaculum lavamentivorans (strain DS-1 / DSM 13023 / NCIMB 13966).